Here is a 194-residue protein sequence, read N- to C-terminus: MSGGPVPVWKKYTTRPQGIWEKIRQLLVLVPNRSSGNPLVSLFRQVPPGERIKEAQNYKDPVTIPAGDIKGNPYFKRDYRRNYPQVHTFNQTKISGLLNLGSESNPRISIGEKGNKELAVFTNGQDVSLASTLKSVPASVVKGEVLGKSGEPIVAPSLNKFKWEILPEPVHGMYSEAYPCRIFTEKKVRSQSSA.

In terms of biological role, fungal-specific subunit of the mitochondrial membrane respiratory chain NADH dehydrogenase (Complex I). Complex I functions in the transfer of electrons from NADH to the respiratory chain. The immediate electron acceptor for the enzyme is believed to be ubiquinone. Plays a role in cell wall integrity and is involved in osmotic and oxidative resistance, yeast to hypha transition, and virulence via providing the ability to damage and invade host cells such as oral epithelial cells. The protein is NADH-ubiquinone oxidoreductase subunit NUO2 of Candida albicans (strain SC5314 / ATCC MYA-2876) (Yeast).